The primary structure comprises 209 residues: dITP/XTP pyrophosphatase (209 aa).

7-12 contacts substrate; the sequence is SSHGYK. D70 (proton acceptor) is an active-site residue. Residue D70 coordinates Mg(2+). Substrate-binding positions include S71, 154–157, K177, and 182–183; these read FGYD and HR.

Belongs to the HAM1 NTPase family. Homodimer. Mg(2+) serves as cofactor.

It catalyses the reaction XTP + H2O = XMP + diphosphate + H(+). The catalysed reaction is dITP + H2O = dIMP + diphosphate + H(+). It carries out the reaction ITP + H2O = IMP + diphosphate + H(+). Pyrophosphatase that catalyzes the hydrolysis of nucleoside triphosphates to their monophosphate derivatives, with a high preference for the non-canonical purine nucleotides XTP (xanthosine triphosphate), dITP (deoxyinosine triphosphate) and ITP. Seems to function as a house-cleaning enzyme that removes non-canonical purine nucleotides from the nucleotide pool, thus preventing their incorporation into DNA/RNA and avoiding chromosomal lesions. The sequence is that of dITP/XTP pyrophosphatase from Chlamydia trachomatis serovar L2 (strain ATCC VR-902B / DSM 19102 / 434/Bu).